A 488-amino-acid chain; its full sequence is MAAGSEATTPVIVAAGAGGEEGEHVKPFKPEKAKEIIMSLQQPAIFCNMVFDWPARHWNAKYLSQVLHGKQIRFRMGMKSMSTVPQFETTCNYVEATLEEFLTWNCDQSSISGPFRDYDHSKFWAYADYKYFVSLFEDKTDLFQDVKWSDFGFPGRNGQESTLWIGSLGAHTPCHLDSYGCNLVFQVQGRKRWHLFPPEDTPFLYPTRIPYEESSVFSKINVVNPDLKRFPQFRKAQRHAVTLSPGQVLFVPRHWWHYVESIDPVTVSINSWIELEEDHLARVEEAITRMLVCALKTAENPQNTRAWLNPTEVEETSHAVNCCYLNAAVSAFFDRCRTSEVVEIQALRTDGEHMKKEELNVCNHMEVGQTGSQNLTTGTDKPEAASPFGPDLVPVAQRSEEPPSERGGIFGSDGKDFVDKDGEHFGKLHCAKRQQIMSNSENAIEEQIASNTTTTPQTFISTDDLLDCLVNPQVTRIVAQLLIQGRSL.

Positions 88–208 (ETTCNYVEAT…EDTPFLYPTR (121 aa)) are interaction with HSPB1. In terms of domain architecture, JmjC spans 124-288 (WAYADYKYFV…HLARVEEAIT (165 aa)). The span at 369 to 379 (QTGSQNLTTGT) shows a compositional bias: polar residues. The tract at residues 369 to 415 (QTGSQNLTTGTDKPEAASPFGPDLVPVAQRSEEPPSERGGIFGSDGK) is disordered.

As to quaternary structure, interacts with CRYAB and HSPB1. Widely expressed.

The protein resides in the cytoplasm. In terms of biological role, may play a role in cellular stress response. This is HSPB1-associated protein 1 (HSPBAP1) from Homo sapiens (Human).